The chain runs to 295 residues: UDP-N-acetylenolpyruvoylglucosamine reductase (295 aa).

Residues 24 to 188 (KVGGNAEIFF…LKAVFKINKG (165 aa)) form the FAD-binding PCMH-type domain. Residue R168 is part of the active site. The active-site Proton donor is the S217. Residue E287 is part of the active site.

It belongs to the MurB family. Requires FAD as cofactor.

The protein localises to the cytoplasm. The catalysed reaction is UDP-N-acetyl-alpha-D-muramate + NADP(+) = UDP-N-acetyl-3-O-(1-carboxyvinyl)-alpha-D-glucosamine + NADPH + H(+). It functions in the pathway cell wall biogenesis; peptidoglycan biosynthesis. Cell wall formation. This chain is UDP-N-acetylenolpyruvoylglucosamine reductase, found in Rickettsia massiliae (strain Mtu5).